The primary structure comprises 340 residues: Protein-arginine kinase (340 aa).

The 222-residue stretch at 21-242 (VVLSSRIRLA…EQIIMQERVA (222 aa)) folds into the Phosphagen kinase C-terminal domain. ATP is bound by residues 24 to 28 (SSRIR), histidine 79, arginine 113, 164 to 168 (RASVM), and 195 to 200 (RGIYGE).

The protein belongs to the ATP:guanido phosphotransferase family.

It carries out the reaction L-arginyl-[protein] + ATP = N(omega)-phospho-L-arginyl-[protein] + ADP + H(+). Catalyzes the specific phosphorylation of arginine residues in proteins. This Listeria monocytogenes serovar 1/2a (strain ATCC BAA-679 / EGD-e) protein is Protein-arginine kinase.